An 88-amino-acid polypeptide reads, in one-letter code: Small ribosomal subunit protein uS17 (88 aa).

This sequence belongs to the universal ribosomal protein uS17 family. As to quaternary structure, part of the 30S ribosomal subunit.

In terms of biological role, one of the primary rRNA binding proteins, it binds specifically to the 5'-end of 16S ribosomal RNA. The polypeptide is Small ribosomal subunit protein uS17 (Helicobacter hepaticus (strain ATCC 51449 / 3B1)).